The following is a 288-amino-acid chain: UDP-3-O-acyl-N-acetylglucosamine deacetylase (288 aa).

Zn(2+) is bound by residues histidine 79, histidine 236, and aspartate 240. The active-site Proton donor is histidine 263.

The protein belongs to the LpxC family. Zn(2+) serves as cofactor.

It catalyses the reaction a UDP-3-O-[(3R)-3-hydroxyacyl]-N-acetyl-alpha-D-glucosamine + H2O = a UDP-3-O-[(3R)-3-hydroxyacyl]-alpha-D-glucosamine + acetate. It participates in glycolipid biosynthesis; lipid IV(A) biosynthesis; lipid IV(A) from (3R)-3-hydroxytetradecanoyl-[acyl-carrier-protein] and UDP-N-acetyl-alpha-D-glucosamine: step 2/6. In terms of biological role, catalyzes the hydrolysis of UDP-3-O-myristoyl-N-acetylglucosamine to form UDP-3-O-myristoylglucosamine and acetate, the committed step in lipid A biosynthesis. This is UDP-3-O-acyl-N-acetylglucosamine deacetylase from Rickettsia africae (strain ESF-5).